Consider the following 239-residue polypeptide: Ribonuclease 3 (239 aa).

Positions 18–141 constitute an RNase III domain; sequence YLTLEKALGY…LMAGVYLEAG (124 aa). Glu54 is a Mg(2+) binding site. Residue Asp58 is part of the active site. The Mg(2+) site is built by Ser127 and Glu130. The active site involves Glu130. One can recognise a DRBM domain in the interval 168-237; sequence DYKTALQELT…AYQALQKLKE (70 aa).

Belongs to the ribonuclease III family. As to quaternary structure, homodimer. Mg(2+) is required as a cofactor.

The protein localises to the cytoplasm. The enzyme catalyses Endonucleolytic cleavage to 5'-phosphomonoester.. In terms of biological role, digests double-stranded RNA. Involved in the processing of primary rRNA transcript to yield the immediate precursors to the large and small rRNAs (23S and 16S). Processes some mRNAs, and tRNAs when they are encoded in the rRNA operon. Processes pre-crRNA and tracrRNA of type II CRISPR loci if present in the organism. This chain is Ribonuclease 3, found in Helicobacter pylori (strain P12).